The primary structure comprises 142 residues: Large ribosomal subunit protein uL29 (142 aa).

It belongs to the universal ribosomal protein uL29 family.

This Theileria annulata protein is Large ribosomal subunit protein uL29 (RPL35).